Reading from the N-terminus, the 692-residue chain is Vitamin B12-dependent ribonucleoside-diphosphate reductase (692 aa).

The 89-residue stretch at 7-95 (AKVRRRDGTL…IYRQRRAELR (89 aa)) folds into the ATP-cone domain. Residues serine 177, 192 to 193 (GC), glycine 221, 375 to 379 (NPCGE), and 520 to 524 (PTGTI) contribute to the substrate site. The cysteines at positions 193 and 388 are disulfide-linked. The active-site Proton acceptor is the asparagine 375. Cysteine 377 acts as the Cysteine radical intermediate in catalysis. The Proton acceptor role is filled by glutamate 379.

It belongs to the ribonucleoside diphosphate reductase class-2 family. Adenosylcob(III)alamin is required as a cofactor.

The enzyme catalyses a 2'-deoxyribonucleoside 5'-diphosphate + [thioredoxin]-disulfide + H2O = a ribonucleoside 5'-diphosphate + [thioredoxin]-dithiol. In terms of biological role, provides the precursors necessary for DNA synthesis. Catalyzes the biosynthesis of deoxyribonucleotides from the corresponding ribonucleotides. In Mycobacterium tuberculosis (strain CDC 1551 / Oshkosh), this protein is Vitamin B12-dependent ribonucleoside-diphosphate reductase (nrdZ).